The sequence spans 525 residues: MSNPVQSDKDRVVIFDTTLRDGEQCPGATMTFEEKLNIAAMLDDMGVDIIEAGFPIASDGDFEAVNEIAKRSKNAVICGLSRAGAKDIDRCAEAIRPAKRGRIHTFLSTSPVHMKYKLQMDPQQVFELVISSVTRARNHTDDVEWSSEDGTRTEFDFLCRCVEAAIKAGASTINIPDTVGYAVPEEYYDLFKRVRETVPNSDKAVFSVHCHNDLGMAVANSMAGVRAGARQIECTINGIGERAGNAALEEVVMAMRVRNDKLPFWNKIDTTQLTHASKVVSAATSFPVQYNKAIVGRNAFAHESGIHQDGMLKNAQTYEIMLPETVGVKQTSLVMGKHSGRHAFIHKLEEMGHKLSSNQVEDAFVRFKALADRKKQIYDEDIEALIDEGMVSAHDRIKLLSLSVIAGTRGPQRATMKLDIDGVTRIEESEGNGPVDAVFNCIKSLVPHEAKLELYQVHAVTEGTDAQAEVSVRLSQDGRSMTARAADPDTLVASAKAYLGALNKLVMKRQRDVAPGHGASAAAAS.

A Pyruvate carboxyltransferase domain is found at 12 to 274 (VVIFDTTLRD…WNKIDTTQLT (263 aa)). Positions 21, 209, 211, and 245 each coordinate Mn(2+). The regulatory domain stretch occupies residues 398 to 525 (KLLSLSVIAG…GHGASAAAAS (128 aa)).

It belongs to the alpha-IPM synthase/homocitrate synthase family. LeuA type 1 subfamily. Homodimer. Mn(2+) serves as cofactor.

Its subcellular location is the cytoplasm. It catalyses the reaction 3-methyl-2-oxobutanoate + acetyl-CoA + H2O = (2S)-2-isopropylmalate + CoA + H(+). It participates in amino-acid biosynthesis; L-leucine biosynthesis; L-leucine from 3-methyl-2-oxobutanoate: step 1/4. In terms of biological role, catalyzes the condensation of the acetyl group of acetyl-CoA with 3-methyl-2-oxobutanoate (2-ketoisovalerate) to form 3-carboxy-3-hydroxy-4-methylpentanoate (2-isopropylmalate). This is 2-isopropylmalate synthase from Bradyrhizobium sp. (strain ORS 278).